Here is a 210-residue protein sequence, read N- to C-terminus: Tissue inhibitor of metalloproteinase (210 aa).

An N-terminal signal peptide occupies residues 1 to 27 (MDLRKHLGLLTLLLVAVFAFYGRPADA). Cys28 lines the Zn(2+) pocket. Involved in metalloproteinase-binding regions lie at residues 28–31 (CSCM) and 93–94 (DA). 5 cysteine pairs are disulfide-bonded: Cys28-Cys96, Cys30-Cys118, Cys145-Cys195, Cys150-Cys155, and Cys165-Cys180. The NTR domain maps to 28 to 145 (CSCMPSHPQT…SGGYAKATNC (118 aa)).

It belongs to the protease inhibitor I35 (TIMP) family. In terms of tissue distribution, expressed in heads of female and male adult flies. Expressed at the time of eclosion in unopened wings of adult flies. Strongly expressed at the tip of ovarian germarium region 1 where germline stem cells (GSCs) and cystoblasts reside and in region 2 of the germarium.

The protein localises to the secreted. Metalloproteinase inhibitor that acts on both matrix metalloproteinases Mmp1 and Mmp2 in vitro. Complexes with metalloproteinases and irreversibly inactivates them by binding to their catalytic zinc cofactor. Required for wing maturation which is the final step in morphogenesis of the adult fly. Involved in the negative regulation of developmental tissue invasion for imaginal disk eversion during metamorphosis by inhibiting Mmp-mediated basement membrane (BM) degradation. Required for oogenesis and for the long-term maintainance of germarial structure and shape in the adult ovaries. Required for maintaining composition and biophysical properties of the extracellular matrix (ECM), and for the normal organization and cyst production of the germline stem cell (GSC) niche. In Drosophila melanogaster (Fruit fly), this protein is Tissue inhibitor of metalloproteinase.